The chain runs to 331 residues: Very-long-chain 3-oxoacyl-CoA reductase (331 aa).

Residues 15–35 traverse the membrane as a helical segment; it reads VQWALAGVGALYISAKVLSYL. NADP(+) is bound by residues Val-60, Asp-115, Asp-123, Asn-142, Tyr-209, Lys-213, Ile-242, and Ser-244. Catalysis depends on Tyr-209, which acts as the Proton donor. Residue Lys-213 is the Lowers pKa of active site Tyr of the active site.

The protein belongs to the short-chain dehydrogenases/reductases (SDR) family.

It localises to the endoplasmic reticulum membrane. It carries out the reaction a very-long-chain (3R)-3-hydroxyacyl-CoA + NADP(+) = a very-long-chain 3-oxoacyl-CoA + NADPH + H(+). It functions in the pathway lipid metabolism; fatty acid biosynthesis. Functionally, component of the microsomal membrane bound fatty acid elongation system, which produces the 26-carbon very long-chain fatty acids (VLCFA) from palmitate. Catalyzes the reduction of the 3-ketoacyl-CoA intermediate that is formed in each cycle of fatty acid elongation. VLCFAs serve as precursors for ceramide and sphingolipids. The sequence is that of Very-long-chain 3-oxoacyl-CoA reductase from Pyricularia oryzae (strain 70-15 / ATCC MYA-4617 / FGSC 8958) (Rice blast fungus).